Here is a 400-residue protein sequence, read N- to C-terminus: Elongation factor Tu (400 aa).

The tr-type G domain occupies lysine 10 to glutamine 209. A G1 region spans residues glycine 19–threonine 26. Residue glycine 19–threonine 26 coordinates GTP. Threonine 26 contacts Mg(2+). The G2 stretch occupies residues glycine 60–asparagine 64. Residues aspartate 81–glycine 84 form a G3 region. GTP is bound by residues aspartate 81–histidine 85 and asparagine 136–aspartate 139. The tract at residues asparagine 136–aspartate 139 is G4. Residues serine 174–leucine 176 form a G5 region.

This sequence belongs to the TRAFAC class translation factor GTPase superfamily. Classic translation factor GTPase family. EF-Tu/EF-1A subfamily. As to quaternary structure, monomer.

It is found in the cytoplasm. It carries out the reaction GTP + H2O = GDP + phosphate + H(+). GTP hydrolase that promotes the GTP-dependent binding of aminoacyl-tRNA to the A-site of ribosomes during protein biosynthesis. This chain is Elongation factor Tu, found in Caldicellulosiruptor bescii (strain ATCC BAA-1888 / DSM 6725 / KCTC 15123 / Z-1320) (Anaerocellum thermophilum).